A 268-amino-acid polypeptide reads, in one-letter code: Putative hydro-lyase ABAYE2440 (268 aa).

It belongs to the D-glutamate cyclase family.

The chain is Putative hydro-lyase ABAYE2440 from Acinetobacter baumannii (strain AYE).